The chain runs to 232 residues: N-(5'-phosphoribosyl)anthranilate isomerase (232 aa).

The protein belongs to the TrpF family.

The enzyme catalyses N-(5-phospho-beta-D-ribosyl)anthranilate = 1-(2-carboxyphenylamino)-1-deoxy-D-ribulose 5-phosphate. Its pathway is amino-acid biosynthesis; L-tryptophan biosynthesis; L-tryptophan from chorismate: step 3/5. This chain is N-(5'-phosphoribosyl)anthranilate isomerase (TRP1), found in Wickerhamomyces anomalus (Yeast).